Consider the following 222-residue polypeptide: 2-C-methyl-D-erythritol 4-phosphate cytidylyltransferase (222 aa).

It belongs to the IspD/TarI cytidylyltransferase family. IspD subfamily.

The enzyme catalyses 2-C-methyl-D-erythritol 4-phosphate + CTP + H(+) = 4-CDP-2-C-methyl-D-erythritol + diphosphate. Its pathway is isoprenoid biosynthesis; isopentenyl diphosphate biosynthesis via DXP pathway; isopentenyl diphosphate from 1-deoxy-D-xylulose 5-phosphate: step 2/6. Catalyzes the formation of 4-diphosphocytidyl-2-C-methyl-D-erythritol from CTP and 2-C-methyl-D-erythritol 4-phosphate (MEP). This Porphyromonas gingivalis (strain ATCC 33277 / DSM 20709 / CIP 103683 / JCM 12257 / NCTC 11834 / 2561) protein is 2-C-methyl-D-erythritol 4-phosphate cytidylyltransferase.